We begin with the raw amino-acid sequence, 359 residues long: Molybdenum import ATP-binding protein ModC (359 aa).

Residues 1 to 229 (MLELNFSQQL…SALRPWLQRE (229 aa)) form the ABC transporter domain. An ATP-binding site is contributed by 31–38 (GLSGAGKT). The Mop domain maps to 289–354 (SSSIRNILPV…IKSVSFNRQN (66 aa)).

It belongs to the ABC transporter superfamily. Molybdate importer (TC 3.A.1.8) family. As to quaternary structure, the complex is composed of two ATP-binding proteins (ModC), two transmembrane proteins (ModB) and a solute-binding protein (ModA).

It localises to the cell inner membrane. The catalysed reaction is molybdate(out) + ATP + H2O = molybdate(in) + ADP + phosphate + H(+). Its function is as follows. Part of the ABC transporter complex ModABC involved in molybdenum import. Responsible for energy coupling to the transport system. The protein is Molybdenum import ATP-binding protein ModC of Yersinia pseudotuberculosis serotype I (strain IP32953).